Consider the following 222-residue polypeptide: Cytochrome b6 (222 aa).

Residues 39-59 traverse the membrane as a helical segment; the sequence is IFYCLGGITLVCFIIQFATGF. Cys-42 is a heme c binding site. Heme b contacts are provided by His-93 and His-107. 3 helical membrane-spanning segments follow: residues 97-117, 123-143, and 193-213; these read ASMMVLMMILHVFRVYLTGGF, LTWMTGVILAVITVSFGVTGY, and LHTFVFPWLIAVFMLMHFLMI. Positions 194 and 209 each coordinate heme b.

The protein belongs to the cytochrome b family. PetB subfamily. In terms of assembly, the 4 large subunits of the cytochrome b6-f complex are cytochrome b6, subunit IV (17 kDa polypeptide, PetD), cytochrome f and the Rieske protein, while the 4 small subunits are PetG, PetL, PetM and PetN. The complex functions as a dimer. Heme b serves as cofactor. It depends on heme c as a cofactor.

The protein resides in the cellular thylakoid membrane. In terms of biological role, component of the cytochrome b6-f complex, which mediates electron transfer between photosystem II (PSII) and photosystem I (PSI), cyclic electron flow around PSI, and state transitions. This Rippkaea orientalis (strain PCC 8801 / RF-1) (Cyanothece sp. (strain PCC 8801)) protein is Cytochrome b6.